The sequence spans 745 residues: MKETDREAVATAVQRVAGMLQRPDQLDKVEQYRRREARKKASVEARLKAAIQSQLDGVRTGLSQLHNALNDVKDIQQSLADVSKDWRQSINTIESLKDVKDAVVRHSQLAAAVENLKNIFSVPEIVRETQDLIEHGELLQAHRKLMDLECSRDGLMYEQYRMDSGNTRDMTLIHSYFGSTQGLSDELAKQLWMVLQRSLVTVRRDPTLLVSVVRIIEREEKIDRRILDRKKQTGFVPPGRPKNWKEKMFTILDRTVTTRIEGTQADTRESDRMWLVRHLEIIRKYVLDDLIVAKNLLAQCFPPHYEIFRSLLRTYHQALSARMQDLAAEDLEANEIVSLLTWVLNTYTSVEMMGNAELAPEVDVALLEPLLSADVVSALLDTYMSTLTSNIIAWLRKALETDKKDWMKETEPEADQDGYYQTTLPAIVFQMFEQNLQVAAQISEDLKTKVLVLCLQQMNSFLSRYKEEAQLYRDEHLRDRQHPHCYVQYMVAVVNNCQTFKESIVSLKRKYLKHEAEEGVSLSQPSMDGVLDAIAKEGCGSLLEEVFLDLEQHLNELMTKKWLLGSNAVDIICVTVEDYFNDFAKIKKPYRKRMIAEAHRRAVQEYLRAVMQKRISFRSAEERKDGAERMVREAEQLRFLFRKLASGFGEEMDSYCDTIVAVAEVIKLTDPSLLYLEVSTLVSKYPDIRDDHIGALLAMRGDASRDMKQTIIETLEQGPAQASPDYVPIFKDIVVPSLNVAKLLK.

Position 28 is an N6-acetyllysine (Lys-28).

It belongs to the SEC6 family. As to quaternary structure, the exocyst complex is composed of EXOC1, EXOC2, EXOC3, EXOC4, EXOC5, EXOC6, EXOC7 and EXOC8. Interacts with EXOC3L1. Interacts with BIRC6/bruce. Interacts with MYRIP. Interacts with SLC6A9.

The protein resides in the cytoplasm. It localises to the perinuclear region. Its subcellular location is the cell projection. It is found in the growth cone. The protein localises to the neuron projection. The protein resides in the midbody. It localises to the golgi apparatus. Functionally, component of the exocyst complex involved in the docking of exocytic vesicles with fusion sites on the plasma membrane. The polypeptide is Exocyst complex component 3 (EXOC3) (Bos taurus (Bovine)).